Consider the following 614-residue polypeptide: UvrABC system protein C (614 aa).

The GIY-YIG domain maps to 12 to 91 (ESPGVYLMKG…IKKHRPRYNL (80 aa)). The UVR domain maps to 201 to 236 (RDLLKTYRERMASAAANERYEEAARYRDLIRAIEVT).

It belongs to the UvrC family. In terms of assembly, interacts with UvrB in an incision complex.

The protein localises to the cytoplasm. In terms of biological role, the UvrABC repair system catalyzes the recognition and processing of DNA lesions. UvrC both incises the 5' and 3' sides of the lesion. The N-terminal half is responsible for the 3' incision and the C-terminal half is responsible for the 5' incision. This Geobacter metallireducens (strain ATCC 53774 / DSM 7210 / GS-15) protein is UvrABC system protein C.